The primary structure comprises 186 residues: Interferon beta-2 (186 aa).

A signal peptide spans Met-1–Ser-21. The cysteines at positions 52 and 161 are disulfide-linked. Asn-131 and Asn-173 each carry an N-linked (GlcNAc...) asparagine glycan.

Belongs to the alpha/beta interferon family. As to quaternary structure, monomer.

It localises to the secreted. Its function is as follows. Has antiviral, antibacterial and anticancer activities. This is Interferon beta-2 (IFNB2) from Bos taurus (Bovine).